Reading from the N-terminus, the 124-residue chain is uncharacterized protein (124 aa).

The interval 1–65 (MAENSRYVRL…RPASSSNPDY (65 aa)) is disordered. Polar residues predominate over residues 37-47 (LNSNDAESQQV).

This is an uncharacterized protein from Microplitis demolitor (Parasitoid wasp).